Here is a 478-residue protein sequence, read N- to C-terminus: Growth/differentiation factor 10 (478 aa).

The signal sequence occupies residues 1–33 (MAHVPARTSPGPGPQLLLLLLPLFLLLLRDVAG). Positions 34 to 368 (SHRAPAWSAL…EKTMQKARRK (335 aa)) are excised as a propeptide. N-linked (GlcNAc...) asparagine glycans are attached at residues Asn-118, Asn-156, and Asn-281. Residues 266–319 (YDPFPAGDPEPRAAPNNSADPRVRRAAQATGPLQDNELPGLDERPPRAHAQHFH) are disordered. 3 disulfide bridges follow: Cys-376-Cys-443, Cys-405-Cys-475, and Cys-409-Cys-477. An N-linked (GlcNAc...) asparagine glycan is attached at Asn-469.

It belongs to the TGF-beta family. As to quaternary structure, homodimer or heterodimer. Can form a non-covalent complex of the mature region and the pro-region. As to expression, expressed in femur, brain, lung, skeletal muscle, pancreas and testis.

The protein localises to the secreted. Its function is as follows. Growth factor involved in osteogenesis and adipogenesis. Plays an inhibitory role in the process of osteoblast differentiation via SMAD2/3 pathway. Plays an inhibitory role in the process of adipogenesis. This chain is Growth/differentiation factor 10, found in Homo sapiens (Human).